The primary structure comprises 463 residues: L-seryl-tRNA(Sec) selenium transferase (463 aa).

Lysine 295 is modified (N6-(pyridoxal phosphate)lysine).

Belongs to the SelA family. As to quaternary structure, homodecamer; pentamer of dimers. Binds only one seryl-tRNA(Sec) per dimer. The cofactor is pyridoxal 5'-phosphate.

It localises to the cytoplasm. The catalysed reaction is L-seryl-tRNA(Sec) + selenophosphate + H(+) = L-selenocysteinyl-tRNA(Sec) + phosphate. It functions in the pathway aminoacyl-tRNA biosynthesis; selenocysteinyl-tRNA(Sec) biosynthesis; selenocysteinyl-tRNA(Sec) from L-seryl-tRNA(Sec) (bacterial route): step 1/1. Its function is as follows. Converts seryl-tRNA(Sec) to selenocysteinyl-tRNA(Sec) required for selenoprotein biosynthesis. The chain is L-seryl-tRNA(Sec) selenium transferase from Salmonella paratyphi B (strain ATCC BAA-1250 / SPB7).